The primary structure comprises 543 residues: Periplasmic oligopeptide-binding protein OppA (543 aa).

An N-terminal signal peptide occupies residues 1 to 26 (MSNITKKSLIAAGILTALIAASAATA). Cys-297 and Cys-443 are joined by a disulfide.

It belongs to the bacterial solute-binding protein 5 family. The complex is composed of two ATP-binding proteins (OppD and OppF), two transmembrane proteins (OppB and OppC) and a solute-binding protein (OppA).

The protein localises to the periplasm. In terms of biological role, part of the ABC transporter complex OppABCDF involved in the uptake of oligopeptides, including the cell wall murein tripeptide L-alanyl-gamma-D-glutamyl-meso-diaminopimelate. Plays an important nutritional role and is involved in the recycling of cell wall peptides. Binds peptides containing from two to five amino acid residues regardless of their sequence. Also binds cell wall peptides, such as L-alanyl-gamma-D-glutamyl-meso-diaminopimelate. This is Periplasmic oligopeptide-binding protein OppA from Salmonella typhimurium (strain LT2 / SGSC1412 / ATCC 700720).